Reading from the N-terminus, the 460-residue chain is Bifunctional protein GlmU (460 aa).

Residues 1–229 (MTNYAIILAA…FNESLGVNDR (229 aa)) form a pyrophosphorylase region. Residues 8–11 (LAAG), lysine 22, glutamine 72, and 77–78 (GT) contribute to the UDP-N-acetyl-alpha-D-glucosamine site. Aspartate 102 is a binding site for Mg(2+). Residues glycine 139, glutamate 154, asparagine 169, and asparagine 227 each contribute to the UDP-N-acetyl-alpha-D-glucosamine site. Residue asparagine 227 coordinates Mg(2+). Residues 230-250 (VALATAETVMRQRITQKHMVN) form a linker region. Residues 251–460 (GVTFQNPETV…RLAHHPSRSK (210 aa)) form an N-acetyltransferase region. Positions 332 and 350 each coordinate UDP-N-acetyl-alpha-D-glucosamine. The active-site Proton acceptor is the histidine 362. The UDP-N-acetyl-alpha-D-glucosamine site is built by tyrosine 365 and asparagine 376. Residues alanine 379, 385-386 (NY), serine 404, alanine 422, and arginine 439 contribute to the acetyl-CoA site.

It in the N-terminal section; belongs to the N-acetylglucosamine-1-phosphate uridyltransferase family. In the C-terminal section; belongs to the transferase hexapeptide repeat family. As to quaternary structure, homotrimer. Mg(2+) is required as a cofactor.

The protein resides in the cytoplasm. It catalyses the reaction alpha-D-glucosamine 1-phosphate + acetyl-CoA = N-acetyl-alpha-D-glucosamine 1-phosphate + CoA + H(+). The catalysed reaction is N-acetyl-alpha-D-glucosamine 1-phosphate + UTP + H(+) = UDP-N-acetyl-alpha-D-glucosamine + diphosphate. Its pathway is nucleotide-sugar biosynthesis; UDP-N-acetyl-alpha-D-glucosamine biosynthesis; N-acetyl-alpha-D-glucosamine 1-phosphate from alpha-D-glucosamine 6-phosphate (route II): step 2/2. The protein operates within nucleotide-sugar biosynthesis; UDP-N-acetyl-alpha-D-glucosamine biosynthesis; UDP-N-acetyl-alpha-D-glucosamine from N-acetyl-alpha-D-glucosamine 1-phosphate: step 1/1. It participates in bacterial outer membrane biogenesis; LPS lipid A biosynthesis. Functionally, catalyzes the last two sequential reactions in the de novo biosynthetic pathway for UDP-N-acetylglucosamine (UDP-GlcNAc). The C-terminal domain catalyzes the transfer of acetyl group from acetyl coenzyme A to glucosamine-1-phosphate (GlcN-1-P) to produce N-acetylglucosamine-1-phosphate (GlcNAc-1-P), which is converted into UDP-GlcNAc by the transfer of uridine 5-monophosphate (from uridine 5-triphosphate), a reaction catalyzed by the N-terminal domain. In Streptococcus pyogenes serotype M18 (strain MGAS8232), this protein is Bifunctional protein GlmU.